A 479-amino-acid chain; its full sequence is GDP-fucose protein O-fucosyltransferase 3 (479 aa).

The Cytoplasmic segment spans residues M1 to K8. A helical; Signal-anchor for type II membrane protein transmembrane segment spans residues L9 to E31. The Lumenal portion of the chain corresponds to L32 to D479. N110 and N168 each carry an N-linked (GlcNAc...) asparagine glycan. Cysteines 389 and 392 form a disulfide.

The protein belongs to the glycosyltransferase 10 family. As to expression, expressed in lung, digestive tract, gall bladder, placenta, kidney, uterus and brain. Not detected in spleen, heart, muscle, liver and pancreas.

It localises to the endoplasmic reticulum membrane. The protein resides in the golgi apparatus membrane. It is found in the golgi apparatus. Its subcellular location is the lysosome. It carries out the reaction L-threonyl-[protein] + GDP-beta-L-fucose = 3-O-(alpha-L-fucosyl)-L-threonyl-[protein] + GDP + H(+). It catalyses the reaction L-seryl-[protein] + GDP-beta-L-fucose = 3-O-(alpha-L-fucosyl)-L-seryl-[protein] + GDP + H(+). It functions in the pathway protein modification; protein glycosylation. In terms of biological role, protein O-fucosyltransferase that specifically catalyzes O-fucosylation of serine or threonine residues in EMI domains of target proteins, such as MMRN1, MMRN2 and EMID1. Attaches fucose through an O-glycosidic linkage. O-fucosylation of EMI domain-containing proteins may be required for facilitating protein folding and secretion. May also show alpha-(1,3)-fucosyltransferase activity toward the innermost N-acetyl glucosamine (GlcNAc) residue in biantennary N-glycan acceptors. However, this was tested with a library of synthetic substrates and this activity is unsure in vivo. May be involved in biosynthesis of Lewis X-carrying biantennary N-glycans that regulate neuron stem cell self-renewal during brain development. The sequence is that of GDP-fucose protein O-fucosyltransferase 3 from Homo sapiens (Human).